Reading from the N-terminus, the 156-residue chain is Small ribosomal subunit protein uS7 (156 aa).

It belongs to the universal ribosomal protein uS7 family. In terms of assembly, part of the 30S ribosomal subunit. Contacts proteins S9 and S11.

Its function is as follows. One of the primary rRNA binding proteins, it binds directly to 16S rRNA where it nucleates assembly of the head domain of the 30S subunit. Is located at the subunit interface close to the decoding center, probably blocks exit of the E-site tRNA. The sequence is that of Small ribosomal subunit protein uS7 from Yersinia enterocolitica serotype O:8 / biotype 1B (strain NCTC 13174 / 8081).